The chain runs to 397 residues: Acetate kinase 2 (397 aa).

Residue asparagine 8 participates in Mg(2+) binding. Residue lysine 15 coordinates ATP. Arginine 89 is a substrate binding site. Aspartate 146 acts as the Proton donor/acceptor in catalysis. ATP contacts are provided by residues 206 to 210 (HLGNG), 281 to 283 (DFR), and 329 to 333 (GVGEN). Residue glutamate 380 participates in Mg(2+) binding.

This sequence belongs to the acetokinase family. In terms of assembly, homodimer. It depends on Mg(2+) as a cofactor. Mn(2+) is required as a cofactor.

The protein localises to the cytoplasm. The catalysed reaction is acetate + ATP = acetyl phosphate + ADP. It participates in metabolic intermediate biosynthesis; acetyl-CoA biosynthesis; acetyl-CoA from acetate: step 1/2. Functionally, catalyzes the formation of acetyl phosphate from acetate and ATP. Can also catalyze the reverse reaction. In Listeria monocytogenes serovar 1/2a (strain ATCC BAA-679 / EGD-e), this protein is Acetate kinase 2.